The following is a 435-amino-acid chain: Arginine biosynthesis bifunctional protein ArgJ, mitochondrial (435 aa).

Residues threonine 179, lysine 205, threonine 216, glutamate 302, asparagine 430, and serine 435 each coordinate substrate. The active-site Nucleophile is threonine 216.

It belongs to the ArgJ family. In terms of assembly, heterodimer of an alpha and a beta chain. Post-translationally, the alpha and beta chains are autoproteolytically processed from a single precursor protein within the mitochondrion.

Its subcellular location is the mitochondrion matrix. The catalysed reaction is N(2)-acetyl-L-ornithine + L-glutamate = N-acetyl-L-glutamate + L-ornithine. It catalyses the reaction L-glutamate + acetyl-CoA = N-acetyl-L-glutamate + CoA + H(+). It participates in amino-acid biosynthesis; L-arginine biosynthesis; L-ornithine and N-acetyl-L-glutamate from L-glutamate and N(2)-acetyl-L-ornithine (cyclic): step 1/1. Its pathway is amino-acid biosynthesis; L-arginine biosynthesis; N(2)-acetyl-L-ornithine from L-glutamate: step 1/4. Catalyzes two activities which are involved in the cyclic version of arginine biosynthesis: the synthesis of acetylglutamate from glutamate and acetyl-CoA, and of ornithine by transacetylation between acetylornithine and glutamate. The polypeptide is Arginine biosynthesis bifunctional protein ArgJ, mitochondrial (Schizosaccharomyces japonicus (strain yFS275 / FY16936) (Fission yeast)).